A 405-amino-acid chain; its full sequence is MGSYMNKTSVVKVGNVLIGGDNPVVVQSMTDTYTADVEKTVRQILALHKAGSEIVRITVNDESAAAAVPEIVKELAKHDCHVPLVGDFHYNGHTLLSKYPECAKALAKYRINPGNVGFGKKKDTQFAEIIKIAIANDKPVRIGVNWGSLDQALLARLIDENNAQENPLSLQQIMYKALITSALESAKYAEELGLAKDKIIISCKVSEVQDLIAVYQKLAKECDYALHLGLTEAGMGTKGIVASAVSLGILLQQGIGNTIRVSLTPAPNAPRTEEVRVCREILQNLGMRTFTPSVTSCPGCGRTTSSFFRELTSKVKDHLDEKMHTWKEQYHGVEAMKVAVMGCVVNGPGESKNADIGISLPGSGESPVAPVFIDGKKAHTLRGDNISEEFIEIVENYVKNRYGKK.

Cysteine 297, cysteine 300, cysteine 343, and glutamate 350 together coordinate [4Fe-4S] cluster.

Belongs to the IspG family. Requires [4Fe-4S] cluster as cofactor.

The enzyme catalyses (2E)-4-hydroxy-3-methylbut-2-enyl diphosphate + oxidized [flavodoxin] + H2O + 2 H(+) = 2-C-methyl-D-erythritol 2,4-cyclic diphosphate + reduced [flavodoxin]. Its pathway is isoprenoid biosynthesis; isopentenyl diphosphate biosynthesis via DXP pathway; isopentenyl diphosphate from 1-deoxy-D-xylulose 5-phosphate: step 5/6. Converts 2C-methyl-D-erythritol 2,4-cyclodiphosphate (ME-2,4cPP) into 1-hydroxy-2-methyl-2-(E)-butenyl 4-diphosphate. The protein is 4-hydroxy-3-methylbut-2-en-1-yl diphosphate synthase (flavodoxin) of Francisella tularensis subsp. mediasiatica (strain FSC147).